A 113-amino-acid polypeptide reads, in one-letter code: Photosystem II reaction center Psb28 protein (113 aa).

Belongs to the Psb28 family. Part of the photosystem II complex.

The protein resides in the cellular thylakoid membrane. The protein is Photosystem II reaction center Psb28 protein of Nostoc punctiforme (strain ATCC 29133 / PCC 73102).